Consider the following 352-residue polypeptide: Cyclin-O (352 aa).

Residues 1–40 (MVTPCPASPGSPAAGAGRRDSHQNLRAPVKKSRRPCLRRK) form a disordered region. The span at 28–40 (PVKKSRRPCLRRK) shows a compositional bias: basic residues. Ser83 carries the phosphoserine modification.

The protein belongs to the cyclin family. In terms of tissue distribution, present in respiratory cells (at protein level). Expressed in multiciliated tissue in brain and fallopian tube (at protein level). Highly expressed in oocytes.

It is found in the cytoplasm. The protein localises to the nucleus. It localises to the nucleolus. In terms of biological role, specifically required for generation of multiciliated cells, possibly by promoting a cell cycle state compatible with centriole amplification and maturation. Acts downstream of MCIDAS to promote mother centriole amplification and maturation in preparation for apical docking. May be involved in apoptosis in lymphoid cells; however, this result requires additional evidences in vivo. May be involved in oocyte meiotic resumption in oocytes. The polypeptide is Cyclin-O (Mus musculus (Mouse)).